A 279-amino-acid polypeptide reads, in one-letter code: HTH-type transcriptional regulator HdfR (279 aa).

Residues 1-58 (MDTELLKTFLEVSRTRHFGRAAESLYLTQSAVSFRIRQLENQLGVNLFTRHRNNIRLT) form the HTH lysR-type domain. The H-T-H motif DNA-binding region spans 18-37 (FGRAAESLYLTQSAVSFRIR).

This sequence belongs to the LysR transcriptional regulatory family.

Its function is as follows. Negatively regulates the transcription of the flagellar master operon flhDC by binding to the upstream region of the operon. In Escherichia fergusonii (strain ATCC 35469 / DSM 13698 / CCUG 18766 / IAM 14443 / JCM 21226 / LMG 7866 / NBRC 102419 / NCTC 12128 / CDC 0568-73), this protein is HTH-type transcriptional regulator HdfR.